The sequence spans 150 residues: Seminal ribonuclease (150 aa).

Positions 1-26 are cleaved as a signal peptide; that stretch reads MALKSLVVLPLLVLVLLLVRVQPSLG. Lys-33 and Arg-36 together coordinate substrate. The Proton acceptor role is filled by His-38. Intrachain disulfides connect Cys-52–Cys-110, Cys-66–Cys-121, Cys-84–Cys-136, and Cys-91–Cys-98. Substrate is bound by residues 67 to 71 and Lys-92; that span reads KPVNT. Asn-93 is modified (deamidated asparagine; by deterioration). Position 111 (Arg-111) interacts with substrate. The active-site Proton donor is the His-145.

Belongs to the pancreatic ribonuclease family. Homodimer; disulfide-linked. Seminal plasma. Can reach 3% of the protein content of this fluid.

The protein resides in the secreted. It catalyses the reaction an [RNA] containing cytidine + H2O = an [RNA]-3'-cytidine-3'-phosphate + a 5'-hydroxy-ribonucleotide-3'-[RNA].. The catalysed reaction is an [RNA] containing uridine + H2O = an [RNA]-3'-uridine-3'-phosphate + a 5'-hydroxy-ribonucleotide-3'-[RNA].. With respect to regulation, allosteric regulation by both substrate and reaction products. Functionally, this enzyme hydrolyzes both single- and double-stranded RNA. The protein is Seminal ribonuclease (SRN) of Bos taurus (Bovine).